We begin with the raw amino-acid sequence, 228 residues long: Cytidylate kinase (228 aa).

11–19 lines the ATP pocket; sequence GPAGTGKSS.

It belongs to the cytidylate kinase family. Type 1 subfamily.

It localises to the cytoplasm. It catalyses the reaction CMP + ATP = CDP + ADP. It carries out the reaction dCMP + ATP = dCDP + ADP. The sequence is that of Cytidylate kinase from Mycobacterium avium (strain 104).